Reading from the N-terminus, the 161-residue chain is Deoxyuridine 5'-triphosphate nucleotidohydrolase (161 aa).

Residues 80–82, asparagine 93, 97–99, and lysine 107 each bind substrate; these read RSG and TVD.

The protein belongs to the dUTPase family. Requires Mg(2+) as cofactor.

It catalyses the reaction dUTP + H2O = dUMP + diphosphate + H(+). It functions in the pathway pyrimidine metabolism; dUMP biosynthesis; dUMP from dCTP (dUTP route): step 2/2. Functionally, this enzyme is involved in nucleotide metabolism: it produces dUMP, the immediate precursor of thymidine nucleotides and it decreases the intracellular concentration of dUTP so that uracil cannot be incorporated into DNA. The chain is Deoxyuridine 5'-triphosphate nucleotidohydrolase from Mesorhizobium japonicum (strain LMG 29417 / CECT 9101 / MAFF 303099) (Mesorhizobium loti (strain MAFF 303099)).